The following is a 454-amino-acid chain: UPF0210 protein EUBELI_01067 (454 aa).

It belongs to the UPF0210 family. In terms of assembly, homodimer.

The polypeptide is UPF0210 protein EUBELI_01067 (Lachnospira eligens (strain ATCC 27750 / DSM 3376 / VPI C15-48 / C15-B4) (Eubacterium eligens)).